Reading from the N-terminus, the 78-residue chain is Delta-conotoxin-like S6.8 (78 aa).

A signal peptide spans Met1–Ala22. A propeptide spanning residues Asp23 to Gly53 is cleaved from the precursor. 3 disulfide bridges follow: Cys54–Cys69, Cys61–Cys73, and Cys68–Cys77.

This sequence belongs to the conotoxin O1 superfamily. As to expression, expressed by the venom duct.

It is found in the secreted. Functionally, delta-conotoxins bind to site 6 of voltage-gated sodium channels (Nav) and inhibit the inactivation process. This is Delta-conotoxin-like S6.8 from Conus striatus (Striated cone).